The sequence spans 428 residues: Adenylosuccinate synthetase (428 aa).

GTP-binding positions include 12–18 (GDEGKGK) and 40–42 (GHS). Residue Asp13 is the Proton acceptor of the active site. Asp13 and Gly40 together coordinate Mg(2+). Residues 13–16 (DEGK), 38–41 (NAGH), Thr128, Arg142, Gln223, Thr238, and Arg302 each bind IMP. His41 functions as the Proton donor in the catalytic mechanism. 298–304 (VTTGRPR) lines the substrate pocket. Residues Arg304, 330-332 (KLD), and 412-414 (GTG) contribute to the GTP site.

The protein belongs to the adenylosuccinate synthetase family. As to quaternary structure, homodimer. Requires Mg(2+) as cofactor.

The protein resides in the cytoplasm. The catalysed reaction is IMP + L-aspartate + GTP = N(6)-(1,2-dicarboxyethyl)-AMP + GDP + phosphate + 2 H(+). The protein operates within purine metabolism; AMP biosynthesis via de novo pathway; AMP from IMP: step 1/2. Its function is as follows. Plays an important role in the de novo pathway of purine nucleotide biosynthesis. Catalyzes the first committed step in the biosynthesis of AMP from IMP. In Bifidobacterium longum (strain NCC 2705), this protein is Adenylosuccinate synthetase.